Consider the following 407-residue polypeptide: Chorismate synthase (407 aa).

Residues R43 and R49 each coordinate NADP(+). FMN-binding positions include 143-145 (RSS), 264-265 (QA), G308, 323-327 (KPIST), and R349.

The protein belongs to the chorismate synthase family. Homotetramer. Requires FMNH2 as cofactor.

It carries out the reaction 5-O-(1-carboxyvinyl)-3-phosphoshikimate = chorismate + phosphate. It functions in the pathway metabolic intermediate biosynthesis; chorismate biosynthesis; chorismate from D-erythrose 4-phosphate and phosphoenolpyruvate: step 7/7. In terms of biological role, catalyzes the anti-1,4-elimination of the C-3 phosphate and the C-6 proR hydrogen from 5-enolpyruvylshikimate-3-phosphate (EPSP) to yield chorismate, which is the branch point compound that serves as the starting substrate for the three terminal pathways of aromatic amino acid biosynthesis. This reaction introduces a second double bond into the aromatic ring system. The chain is Chorismate synthase from Corynebacterium efficiens (strain DSM 44549 / YS-314 / AJ 12310 / JCM 11189 / NBRC 100395).